A 33-amino-acid chain; its full sequence is Photosystem II reaction center protein Psb30 (33 aa).

A helical transmembrane segment spans residues isoleucine 5–leucine 25.

The protein belongs to the Psb30/Ycf12 family. In terms of assembly, PSII is composed of 1 copy each of membrane proteins PsbA, PsbB, PsbC, PsbD, PsbE, PsbF, PsbH, PsbI, PsbJ, PsbK, PsbL, PsbM, PsbT, PsbX, PsbY, PsbZ, Psb30/Ycf12, peripheral proteins of the oxygen-evolving complex and a large number of cofactors. It forms dimeric complexes.

It is found in the plastid. Its subcellular location is the chloroplast thylakoid membrane. Its function is as follows. A core subunit of photosystem II (PSII), probably helps stabilize the reaction center. This is Photosystem II reaction center protein Psb30 from Chlorella vulgaris (Green alga).